Here is a 619-residue protein sequence, read N- to C-terminus: Dihydroxy-acid dehydratase (619 aa).

Asp81 lines the Mg(2+) pocket. Position 122 (Cys122) interacts with [2Fe-2S] cluster. Positions 123 and 124 each coordinate Mg(2+). Lys124 is subject to N6-carboxylysine. Residue Cys195 coordinates [2Fe-2S] cluster. Glu492 provides a ligand contact to Mg(2+). Residue Ser518 is the Proton acceptor of the active site.

Belongs to the IlvD/Edd family. As to quaternary structure, homodimer. [2Fe-2S] cluster serves as cofactor. Requires Mg(2+) as cofactor.

It catalyses the reaction (2R)-2,3-dihydroxy-3-methylbutanoate = 3-methyl-2-oxobutanoate + H2O. The enzyme catalyses (2R,3R)-2,3-dihydroxy-3-methylpentanoate = (S)-3-methyl-2-oxopentanoate + H2O. It functions in the pathway amino-acid biosynthesis; L-isoleucine biosynthesis; L-isoleucine from 2-oxobutanoate: step 3/4. The protein operates within amino-acid biosynthesis; L-valine biosynthesis; L-valine from pyruvate: step 3/4. Functions in the biosynthesis of branched-chain amino acids. Catalyzes the dehydration of (2R,3R)-2,3-dihydroxy-3-methylpentanoate (2,3-dihydroxy-3-methylvalerate) into 2-oxo-3-methylpentanoate (2-oxo-3-methylvalerate) and of (2R)-2,3-dihydroxy-3-methylbutanoate (2,3-dihydroxyisovalerate) into 2-oxo-3-methylbutanoate (2-oxoisovalerate), the penultimate precursor to L-isoleucine and L-valine, respectively. The polypeptide is Dihydroxy-acid dehydratase (Synechococcus elongatus (strain ATCC 33912 / PCC 7942 / FACHB-805) (Anacystis nidulans R2)).